The sequence spans 145 residues: Inner membrane protein YiaA (145 aa).

The Cytoplasmic segment spans residues 1 to 12 (MDNKISTYSPAF). The chain crosses the membrane as a helical span at residues 13–32 (SIVSWIALVGGIVTYLLGLW). Over 33 to 41 (NAEMQLNEK) the chain is Periplasmic. Residues 42–59 (GYYFAVLVLGLFSAASYQ) traverse the membrane as a helical segment. The Cytoplasmic segment spans residues 60-71 (KTVRDKYEGIPT). The helical transmembrane segment at 72-94 (TSIYYMTCLTVFIISVALLMVGL) threads the bilayer. The Periplasmic portion of the chain corresponds to 95–98 (WNAT). The helical transmembrane segment at 99 to 121 (LLLSEKGFYGLAFFLSLFGAVAV) threads the bilayer. The Cytoplasmic segment spans residues 122 to 145 (QKNIRDAGINPPKETQVTQEEYSE).

It localises to the cell inner membrane. This Escherichia coli (strain K12) protein is Inner membrane protein YiaA (yiaA).